We begin with the raw amino-acid sequence, 201 residues long: Ras-related protein Rab-9A (201 aa).

Ala-2 bears the N-acetylalanine mark. Gly-17 is a binding site for GDP. Gly-17, Val-18, Gly-19, Lys-20, Ser-21, Ser-22, Thr-34, His-38, and Thr-39 together coordinate GTP. GDP-binding residues include Gly-19, Lys-20, Ser-21, and Ser-22. Ser-21 is a binding site for Mg(2+). Residues 31 to 42 (KFDTQLFHTIGV) carry the Switch 1 motif. Mg(2+) is bound by residues Thr-39 and Asp-62. Residues 64 to 78 (AGQERFRSLRTPFYR) carry the Switch 2 motif. Positions 65, 124, 125, and 127 each coordinate GTP. Residues Asn-124, Lys-125, Asp-127, Ala-155, and Lys-156 each contribute to the GDP site. Residue Lys-156 coordinates GTP. Position 179 is a phosphoserine (Ser-179). Thr-187 carries the post-translational modification Phosphothreonine. Residues Cys-200 and Cys-201 are each lipidated (S-geranylgeranyl cysteine).

It belongs to the small GTPase superfamily. Rab family. In terms of assembly, interacts (preferentially in its GTP-bound form) with GCC2 (via its GRIP domain). Interacts (GTP-bound form) with SGSM1; the GDP-bound form has much lower affinity for SGSM1. Interacts with SGSM2. The GTP-bound form but not the GDP-bound form interacts with HPS4 and the BLOC-3 complex (heterodimer of HPS1 and HPS4) but does not interact with HPS1 alone. Interacts (GTP-bound form) with NDE1; two RAB9A-GTP molecules lie on the opposite sides of the NDE1 homodimer; the interaction leads to RAB9A-dynein motor tethering. Interacts (GTP-bound form) with NDEL1. Mg(2+) serves as cofactor.

Its subcellular location is the cell membrane. The protein localises to the endoplasmic reticulum membrane. It localises to the golgi apparatus membrane. It is found in the late endosome. The protein resides in the cytoplasmic vesicle. Its subcellular location is the phagosome membrane. The protein localises to the phagosome. It localises to the cytoplasmic vesicle membrane. It is found in the melanosome. The enzyme catalyses GTP + H2O = GDP + phosphate + H(+). With respect to regulation, regulated by guanine nucleotide exchange factors (GEFs) which promote the exchange of bound GDP for free GTP. Regulated by GTPase activating proteins (GAPs) which increase the GTP hydrolysis activity. Inhibited by GDP dissociation inhibitors (GDIs). Functionally, the small GTPases Rab are key regulators of intracellular membrane trafficking, from the formation of transport vesicles to their fusion with membranes. Rabs cycle between an inactive GDP-bound form and an active GTP-bound form that is able to recruit to membranes different sets of downstream effectors directly responsible for vesicle formation, movement, tethering and fusion. RAB9A is involved in the transport of proteins between the endosomes and the trans-Golgi network (TGN). Specifically uses NDE1/NDEL1 as an effector to interact with the dynein motor complex in order to control retrograde trafficking of RAB9-associated late endosomes to the TGN. Involved in the recruitment of SGSM2 to melanosomes and is required for the proper trafficking of melanogenic enzymes TYR, TYRP1 and DCT/TYRP2 to melanosomes in melanocytes. The sequence is that of Ras-related protein Rab-9A (RAB9A) from Canis lupus familiaris (Dog).